The chain runs to 278 residues: Acyl-[acyl-carrier-protein]--UDP-N-acetylglucosamine O-acyltransferase (278 aa).

It belongs to the transferase hexapeptide repeat family. LpxA subfamily. Homotrimer.

It localises to the cytoplasm. It carries out the reaction a (3R)-hydroxyacyl-[ACP] + UDP-N-acetyl-alpha-D-glucosamine = a UDP-3-O-[(3R)-3-hydroxyacyl]-N-acetyl-alpha-D-glucosamine + holo-[ACP]. It functions in the pathway glycolipid biosynthesis; lipid IV(A) biosynthesis; lipid IV(A) from (3R)-3-hydroxytetradecanoyl-[acyl-carrier-protein] and UDP-N-acetyl-alpha-D-glucosamine: step 1/6. Functionally, involved in the biosynthesis of lipid A, a phosphorylated glycolipid that anchors the lipopolysaccharide to the outer membrane of the cell. The protein is Acyl-[acyl-carrier-protein]--UDP-N-acetylglucosamine O-acyltransferase of Brucella abortus (strain S19).